Reading from the N-terminus, the 511-residue chain is 2'-5'-oligoadenylate synthase-like protein 1 (511 aa).

Ubiquitin-like domains lie at 350–429 and 430–506; these read IQVT…ISPE and IQVF…EGAA.

It belongs to the 2-5A synthase family. Specifically interacts with the ligand binding domain of the thyroid receptor (TR). TRIP14 does not require the presence of thyroid hormone for its interaction. Binds MBD1.

The protein resides in the nucleus. It is found in the nucleolus. The protein localises to the cytoplasm. Does not have 2'-5'-OAS activity, but can bind double-stranded RNA. Displays antiviral activity via an alternative antiviral pathway independent of RNase L. The chain is 2'-5'-oligoadenylate synthase-like protein 1 (Oasl1) from Mus musculus (Mouse).